A 238-amino-acid chain; its full sequence is D/L-lactic acid transporter (238 aa).

Transmembrane regions (helical) follow at residues 2–22 (VHQL…GVGV) and 39–59 (IFAI…FGNV). The short motif at 62-64 (NPA) is the NPA 1 element. 3 helical membrane passes run 80–100 (FIPY…IVWI), 135–155 (FFVE…ISEI), and 158–178 (PGIV…GLGG). Residues 185–187 (NLA) carry the NPA 2 motif. The chain crosses the membrane as a helical span at residues 211-231 (YGIIVPGIAPFVGAAIAAWFM).

This sequence belongs to the MIP/aquaporin (TC 1.A.8) family.

It localises to the cell membrane. Transporter that facilitates the transmembrane diffusion of D/L-lactic acid. Is involved in the cellular racemization of lactate and lactate metabolism. The transported molecule is indeed lactic acid and not the lactate anion, in agreement with the assumption that, with very few exceptions, MIPs (major intrinsic proteins) only facilitate the transport of uncharged solutes. Also facilitates urea and H(2)O(2) diffusion across membranes, but is not permeable to water, glycerol and dihydroxyacetone. This Lactiplantibacillus plantarum (strain ATCC BAA-793 / NCIMB 8826 / WCFS1) (Lactobacillus plantarum) protein is D/L-lactic acid transporter.